The following is a 246-amino-acid chain: Dihydromethanopterin reductase (acceptor) (246 aa).

4Fe-4S ferredoxin-type domains follow at residues 150–178 (LPYA…VKRD) and 179–208 (NFVE…EGKE). The [4Fe-4S] cluster site is built by Cys-159, Cys-162, Cys-165, Cys-169, Cys-188, Cys-191, Cys-194, and Cys-198.

In terms of assembly, homodimer. [4Fe-4S] cluster is required as a cofactor.

It carries out the reaction 5,6,7,8-tetrahydromethanopterin + A = 7,8-dihydromethanopterin + AH2. The protein operates within cofactor biosynthesis; 5,6,7,8-tetrahydromethanopterin biosynthesis. Its function is as follows. Involved in the biosynthesis of tetrahydromethanopterin, a coenzyme used in methanogenesis. Catalyzes the reduction of dihydromethanopterin (H(2)MPT) to tetrahydromethanopterin (H(4)MPT). Ferredoxin may serve as an electron donor. This Methanocaldococcus jannaschii (strain ATCC 43067 / DSM 2661 / JAL-1 / JCM 10045 / NBRC 100440) (Methanococcus jannaschii) protein is Dihydromethanopterin reductase (acceptor).